The sequence spans 395 residues: E3 ubiquitin-protein ligase RDUF1 (395 aa).

2 disordered regions span residues 1 to 22 (MMPN…TTTT) and 107 to 130 (PVIV…EGDG). A compositionally biased stretch (low complexity) spans 9–22 (TITPTTESTTTTTT). Positions 121-130 (ERVENEEGDG) are enriched in basic and acidic residues. Residues 215–256 (CAVCTEVFEAGIEGREMPCKHIFHGDCIVPWLSIRNSCPVCR) form an RING-type; atypical zinc finger.

Expressed in root tips, leaf tips, junction of carpels and pedicels, stigma, anthers, pollen, vasculature of sepals and petals, immature seeds and embryos.

The protein localises to the cytoplasm. Its subcellular location is the cytosol. The protein resides in the nucleus. It catalyses the reaction S-ubiquitinyl-[E2 ubiquitin-conjugating enzyme]-L-cysteine + [acceptor protein]-L-lysine = [E2 ubiquitin-conjugating enzyme]-L-cysteine + N(6)-ubiquitinyl-[acceptor protein]-L-lysine.. Its pathway is protein modification; protein ubiquitination. E3 ubiquitin-protein ligase involved in the positive regulation of abscisic acid-dependent drought stress responses. Involved in the positive regulation of responses to salt and osmotic stresses during seed germination and early seedling development. Possesses E3 ubiquitin ligase activity in vitro. This chain is E3 ubiquitin-protein ligase RDUF1, found in Arabidopsis thaliana (Mouse-ear cress).